Reading from the N-terminus, the 142-residue chain is Prefoldin subunit alpha (142 aa).

It belongs to the prefoldin subunit alpha family. Heterohexamer of two alpha and four beta subunits.

The protein resides in the cytoplasm. In terms of biological role, molecular chaperone capable of stabilizing a range of proteins. Seems to fulfill an ATP-independent, HSP70-like function in archaeal de novo protein folding. The chain is Prefoldin subunit alpha from Methanosarcina mazei (strain ATCC BAA-159 / DSM 3647 / Goe1 / Go1 / JCM 11833 / OCM 88) (Methanosarcina frisia).